A 362-amino-acid polypeptide reads, in one-letter code: Chromobox protein homolog 8 (362 aa).

A Chromo domain is found at F11 to P69. The segment covering K90 to R100 has biased composition (basic and acidic residues). Positions K90–E197 are disordered. Position 110 is a phosphoserine (S110). Residues D142–P162 show a composition bias toward basic and acidic residues. 2 positions are modified to phosphoserine: S164 and S229. Phosphotyrosine is present on Y234. Residues S238, S284, S305, and S325 each carry the phosphoserine modification.

As to quaternary structure, component of a PRC1-like complex. Interacts with RING1, RNF2, PCGF1, PCGF2, PCGF3, BMI1, PCGF5, PCGF6 and PHC2. Interacts with histone H3. Interacts with MLLT3. Interacts with PHC2. Interacts (via chromodomain) with single-stranded RNA.

It localises to the nucleus. The protein resides in the chromosome. Component of a Polycomb group (PcG) multiprotein PRC1-like complex, a complex class required to maintain the transcriptionally repressive state of many genes, including Hox genes, throughout development. PcG PRC1 complex acts via chromatin remodeling and modification of histones; it mediates monoubiquitination of histone H2A 'Lys-119', rendering chromatin heritably changed in its expressibility. The sequence is that of Chromobox protein homolog 8 (Cbx8) from Mus musculus (Mouse).